The sequence spans 128 residues: 2-iminobutanoate/2-iminopropanoate deaminase (128 aa).

This sequence belongs to the RutC family.

It is found in the cytoplasm. The enzyme catalyses 2-iminobutanoate + H2O = 2-oxobutanoate + NH4(+). It carries out the reaction 2-iminopropanoate + H2O = pyruvate + NH4(+). Catalyzes the hydrolytic deamination of enamine/imine intermediates that form during the course of normal metabolism. May facilitate the release of ammonia from these potentially toxic reactive metabolites, reducing their impact on cellular components. It may act on enamine/imine intermediates formed by several types of pyridoxal-5'-phosphate-dependent dehydratases including L-threonine dehydratase. Preferentially digests Leu and Met in cooperation with L-amino acid oxidase, but digests Phe poorly. The protein is 2-iminobutanoate/2-iminopropanoate deaminase of Dermatophagoides farinae (American house dust mite).